The following is a 235-amino-acid chain: RAD9, HUS1, RAD1-interacting nuclear orphan protein 1 (235 aa).

The residue at position 50 (Ser50) is a Phosphoserine. An RAD1-binding motif motif is present at residues Ser54 to Phe60. Positions Ser66–Leu106 are disordered. Basic residues predominate over residues Pro69–Thr87. Over residues Glu96 to Leu106 the composition is skewed to low complexity. The D-box signature appears at Arg123–Phe130. The segment at Gln156–Asp198 is disordered. Residues Val162–Glu173 are compositionally biased toward basic and acidic residues. The KEN box signature appears at Gln171–Ser175.

Interacts (when phosphorylated by PLK1) with POLQ; promoting POLQ recruitment to DNA damage sites. Interacts with RAD1; interaction is direct and promotes association with the 9-1-1 (RAD9-RAD1-HUS1) complex. Interacts with RAD18. Interacts with TOPBP1. Interacts with UBE2N. Phosphorylated at Ser-50 by PLK1, promoting interaction with polymerase theta (POLQ). In terms of processing, ubiquitinated and degraded by the APC/C complex upon mitotic exit.

It localises to the nucleus. It is found in the chromosome. Involved in microhomology-mediated end-joining (MMEJ) DNA repair by promoting recruitment of polymerase theta (POLQ) to DNA damage sites during mitosis. MMEJ is an alternative non-homologous end-joining (NHEJ) machinery that takes place during mitosis to repair double-strand breaks in DNA that originate in S-phase. Accumulates in M-phase; following phosphorylation by PLK1, interacts with POLQ, enabling its recruitment to double-strand breaks for subsequent repair. Also involved in the DNA damage response (DDR) signaling in response to genotoxic stresses such as ionizing radiation (IR) during the S phase. Recruited to sites of DNA damage through interaction with the 9-1-1 cell-cycle checkpoint response complex and TOPBP1 in a ATR-dependent manner. Required for the progression of the G1 to S phase transition. Plays a role in the stimulation of CHEK1 phosphorylation. This chain is RAD9, HUS1, RAD1-interacting nuclear orphan protein 1 (Rhno1), found in Rattus norvegicus (Rat).